The following is a 425-amino-acid chain: Phosphomethylpyrimidine synthase (425 aa).

Residues Met94, Tyr123, His162, 184–186 (SRG), 225–228 (NGMR), and Glu264 each bind substrate. His268 provides a ligand contact to Zn(2+). Position 291 (Tyr291) interacts with substrate. His332 contacts Zn(2+). Residues Cys407, Cys410, and Cys414 each coordinate [4Fe-4S] cluster.

It belongs to the ThiC family. [4Fe-4S] cluster serves as cofactor.

The catalysed reaction is 5-amino-1-(5-phospho-beta-D-ribosyl)imidazole + S-adenosyl-L-methionine = 4-amino-2-methyl-5-(phosphooxymethyl)pyrimidine + CO + 5'-deoxyadenosine + formate + L-methionine + 3 H(+). The protein operates within cofactor biosynthesis; thiamine diphosphate biosynthesis. Catalyzes the synthesis of the hydroxymethylpyrimidine phosphate (HMP-P) moiety of thiamine from aminoimidazole ribotide (AIR) in a radical S-adenosyl-L-methionine (SAM)-dependent reaction. The sequence is that of Phosphomethylpyrimidine synthase from Methanocorpusculum labreanum (strain ATCC 43576 / DSM 4855 / Z).